The chain runs to 1025 residues: Putative calcium-transporting ATPase 11, plasma membrane-type (1025 aa).

Over 1–157 the chain is Cytoplasmic; sequence MSNLLKDFEV…NRYTEKPARS (157 aa). An interaction with calmodulin region spans residues 19–30; sequence ARQRWRSSVGLV. Residues 158–178 traverse the membrane as a helical segment; that stretch reads FLTFVWEALQDITLIILMVCA. At 179–196 the chain is on the lumenal side; it reads VVSIGVGVATEGFPKGMY. Residues 197–217 form a helical membrane-spanning segment; sequence DGTGILLSIILVVMVTAISDY. At 218–345 the chain is on the cytoplasmic side; the sequence is KQSLQFRDLD…EDETPLQVKL (128 aa). The helical transmembrane segment at 346–365 threads the bilayer; the sequence is NGVATIIGKIGLGFAVLTFV. Residues 366–395 lie on the Lumenal side of the membrane; that stretch reads VLCIRFVVEKATAGSITEWSSEDALTLLDY. Residues 396 to 413 traverse the membrane as a helical segment; that stretch reads FAIAVTIIVVAVPEGLPL. Residues 414-801 lie on the Cytoplasmic side of the membrane; the sequence is AVTLSLAFAM…KWGRAVYINI (388 aa). Asp-451 functions as the 4-aspartylphosphate intermediate in the catalytic mechanism. Positions 746 and 750 each coordinate Mg(2+). Residues 802 to 820 form a helical membrane-spanning segment; that stretch reads QKFVQFQLTVNVVALIINF. Residues 821 to 831 lie on the Lumenal side of the membrane; the sequence is VSACITGSAPL. A helical transmembrane segment spans residues 832–852; that stretch reads TAVQLLWVNMIMDTLGALALA. At 853 to 872 the chain is on the cytoplasmic side; it reads TEPPNEGLMKRQPIGRTASF. Residues 873–895 form a helical membrane-spanning segment; it reads ITRAMWRNIIGQSIYQLIVLGIL. Residues 896 to 907 lie on the Lumenal side of the membrane; the sequence is NFAGKQILNLNG. A helical transmembrane segment spans residues 908–929; that stretch reads PDSTIVLNTIIFNSFVFCQVFN. Residues 930 to 947 lie on the Cytoplasmic side of the membrane; that stretch reads EVNSREIEKINVFEGMFK. A helical transmembrane segment spans residues 948–969; that stretch reads SWVFVAVMTATVGFQVIIVEFL. The Lumenal segment spans residues 970–979; the sequence is GAFASTVPLS. The chain crosses the membrane as a helical span at residues 980 to 1001; it reads WQHWLLCILIGSVSMILAVGLK. The Cytoplasmic portion of the chain corresponds to 1002–1025; that stretch reads CIPVESNRHHDGYELLPSGPSDSA.

This sequence belongs to the cation transport ATPase (P-type) (TC 3.A.3) family. Type IIB subfamily.

Its subcellular location is the membrane. It carries out the reaction Ca(2+)(in) + ATP + H2O = Ca(2+)(out) + ADP + phosphate + H(+). Its activity is regulated as follows. Activated by calmodulin. Its function is as follows. This magnesium-dependent enzyme catalyzes the hydrolysis of ATP coupled with the translocation of calcium from the cytosol out of the cell or into organelles. The chain is Putative calcium-transporting ATPase 11, plasma membrane-type (ACA11) from Arabidopsis thaliana (Mouse-ear cress).